Reading from the N-terminus, the 309-residue chain is Ribosomal RNA small subunit methyltransferase H (309 aa).

S-adenosyl-L-methionine is bound by residues 33–35 (GGH), aspartate 53, phenylalanine 79, aspartate 100, and glutamine 107.

This sequence belongs to the methyltransferase superfamily. RsmH family.

It is found in the cytoplasm. The enzyme catalyses cytidine(1402) in 16S rRNA + S-adenosyl-L-methionine = N(4)-methylcytidine(1402) in 16S rRNA + S-adenosyl-L-homocysteine + H(+). In terms of biological role, specifically methylates the N4 position of cytidine in position 1402 (C1402) of 16S rRNA. The protein is Ribosomal RNA small subunit methyltransferase H of Clostridium botulinum (strain Okra / Type B1).